The following is a 544-amino-acid chain: Chaperonin GroEL (544 aa).

Residues 29–32 (TLGP), Lys50, 86–90 (DGTTT), Gly413, 479–481 (DAA), and Asp495 contribute to the ATP site.

Belongs to the chaperonin (HSP60) family. Forms a cylinder of 14 subunits composed of two heptameric rings stacked back-to-back. Interacts with the co-chaperonin GroES.

The protein localises to the cytoplasm. The catalysed reaction is ATP + H2O + a folded polypeptide = ADP + phosphate + an unfolded polypeptide.. In terms of biological role, together with its co-chaperonin GroES, plays an essential role in assisting protein folding. The GroEL-GroES system forms a nano-cage that allows encapsulation of the non-native substrate proteins and provides a physical environment optimized to promote and accelerate protein folding. This Borrelia duttonii (strain Ly) protein is Chaperonin GroEL.